The chain runs to 89 residues: MILMITSTTDNLEGFKIVKYLGVVIGYGDDPDDALEDLIDVAEDMGANAVIGIRISNELTTEIISDENYAVPELTYYAYGTAVIVEKID.

It belongs to the UPF0145 family. Highly divergent.

The polypeptide is UPF0145 protein MJ1170 (Methanocaldococcus jannaschii (strain ATCC 43067 / DSM 2661 / JAL-1 / JCM 10045 / NBRC 100440) (Methanococcus jannaschii)).